A 484-amino-acid chain; its full sequence is Catalase (484 aa).

Met-53 carries the post-translational modification Methionine sulfone. Catalysis depends on residues His-54 and Asn-127. A heme-binding site is contributed by Tyr-337.

As to quaternary structure, homotetramer. The cofactor is heme. It depends on NADP(+) as a cofactor.

The protein localises to the cytoplasm. The enzyme catalyses 2 H2O2 = O2 + 2 H2O. Decomposes hydrogen peroxide into water and oxygen; serves to protect cells from the toxic effects of hydrogen peroxide. The protein is Catalase (katA) of Proteus mirabilis.